Reading from the N-terminus, the 261-residue chain is MFSRICSAQLKRTAWTLPKQAHLQSQTIKTFATAPILCKQFKQSDQPRLRINSDAPNFDADTTVGKINFYDYLGDSWGVLFSHPADFTPVCTTEVSAFAKLKPEFDKRNVKLIGLSVEDVESHEKWIQDIKEIAKVKNVGFPIIGDTFRNVAFLYDMVDAEGFKNINDGSLKTVRSVFVIDPKKKIRLIFTYPSTVGRNTSEVLRVIDALQLTDKEGVVTPINWQPADDVIIPPSVSNDEAKAKFGQFNEIKPYLRFTKSK.

A mitochondrion-targeting transit peptide spans 1–13 (MFSRICSAQLKRT). The 164-residue stretch at 49–212 (LRINSDAPNF…VLRVIDALQL (164 aa)) folds into the Thioredoxin domain. Ser-53 carries the post-translational modification Phosphoserine. Residue Cys-91 is the Cysteine sulfenic acid (-SOH) intermediate of the active site.

This sequence belongs to the peroxiredoxin family. Prx6 subfamily. Homodimer; disulfide-linked.

The protein resides in the mitochondrion. It catalyses the reaction a hydroperoxide + 2 glutathione = an alcohol + glutathione disulfide + H2O. The enzyme catalyses [glutaredoxin]-dithiol + a hydroperoxide = [glutaredoxin]-disulfide + an alcohol + H2O. Functionally, thiol-specific peroxidase that catalyzes the reduction of hydrogen peroxide and organic hydroperoxides to water and alcohols, respectively. Plays a role in cell protection against oxidative stress by detoxifying peroxides and as sensor of hydrogen peroxide-mediated signaling events. Involved in mitochondrial protection of cadmium-induced oxidative stress. This Saccharomyces cerevisiae (strain ATCC 204508 / S288c) (Baker's yeast) protein is Peroxiredoxin PRX1, mitochondrial.